Consider the following 130-residue polypeptide: Small ribosomal subunit protein uS8 (130 aa).

It belongs to the universal ribosomal protein uS8 family. Part of the 30S ribosomal subunit. Contacts proteins S5 and S12.

Its function is as follows. One of the primary rRNA binding proteins, it binds directly to 16S rRNA central domain where it helps coordinate assembly of the platform of the 30S subunit. The polypeptide is Small ribosomal subunit protein uS8 (Pasteurella multocida (strain Pm70)).